The chain runs to 338 residues: NADPH dehydrogenase (338 aa).

FMN is bound at residue 23-26 (SPMC). Residue Y28 participates in substrate binding. FMN is bound by residues A60 and Q102. 164-167 (HGAH) contributes to the substrate binding site. Residues R215 and 307 to 308 (GR) each bind FMN.

The protein belongs to the NADH:flavin oxidoreductase/NADH oxidase family. NamA subfamily. In terms of assembly, homotetramer. Requires FMN as cofactor.

It catalyses the reaction A + NADPH + H(+) = AH2 + NADP(+). Its function is as follows. Catalyzes the reduction of the double bond of an array of alpha,beta-unsaturated aldehydes and ketones. It also reduces the nitro group of nitroester and nitroaromatic compounds. It could have a role in detoxification processes. The sequence is that of NADPH dehydrogenase from Bacillus pumilus (strain SAFR-032).